The following is a 166-amino-acid chain: Large ribosomal subunit protein uL10 (166 aa).

The protein belongs to the universal ribosomal protein uL10 family. Part of the ribosomal stalk of the 50S ribosomal subunit. The N-terminus interacts with L11 and the large rRNA to form the base of the stalk. The C-terminus forms an elongated spine to which L12 dimers bind in a sequential fashion forming a multimeric L10(L12)X complex.

Functionally, forms part of the ribosomal stalk, playing a central role in the interaction of the ribosome with GTP-bound translation factors. This is Large ribosomal subunit protein uL10 from Pseudomonas entomophila (strain L48).